A 179-amino-acid chain; its full sequence is Fucolectin-4 (179 aa).

Positions 1 to 23 (MEVKTIMLLFQILAISTLKQGSA) are cleaved as a signal peptide. The segment at 31–179 (EENVALRGRA…VEVNALLPVN (149 aa)) is F5/8 type C-like. 4 residues coordinate Ca(2+): N58, D61, N63, and S72. 3 disulfides stabilise this stretch: C73–C168, C104–C105, and C130–C146. H75 and R101 together coordinate alpha-L-fucose. Positions 101–103 (RGD) match the Cell attachment site motif. An alpha-L-fucose-binding site is contributed by R108. Positions 168 and 169 each coordinate Ca(2+).

The protein belongs to the fucolectin family. Homotrimer. As to expression, gill mucous cells.

The protein localises to the secreted. Acts as a defensive agent. Recognizes blood group fucosylated oligosaccharides including A, B, H and Lewis B-type antigens. Does not recognize Lewis A antigen and has low affinity for monovalent haptens. The chain is Fucolectin-4 from Anguilla japonica (Japanese eel).